A 733-amino-acid chain; its full sequence is tRNA (guanine(27)-N(2))-dimethyltransferase (733 aa).

The span at 1-18 (MENMAEEELLPLEKEEVE) shows a compositional bias: acidic residues. Residues 1 to 78 (MENMAEEELL…LASAPEEAKS (78 aa)) are disordered. At threonine 26 the chain carries Phosphothreonine. Low complexity-rich tracts occupy residues 39-49 (PDSALDSAPTP) and 57-73 (PALA…ASAP). Serine 66 carries the phosphoserine modification. The Nucleolar localization signal signature appears at 135 to 139 (HKLRR). The C2H2-type zinc finger occupies 184 to 206 (YHCIICSATITRRTDMLGHVRRH). A Trm1 methyltransferase domain is found at 227–688 (EILKEADTDV…APLMQFKSIL (462 aa)). S-adenosyl-L-methionine contacts are provided by arginine 260, aspartate 307, aspartate 357, and alanine 358. Residues cysteine 488, cysteine 491, cysteine 513, and cysteine 515 each contribute to the Zn(2+) site. A Glycyl lysine isopeptide (Lys-Gly) (interchain with G-Cter in SUMO2) cross-link involves residue lysine 585. 2 positions are modified to phosphoserine: serine 612 and serine 707.

It belongs to the class I-like SAM-binding methyltransferase superfamily. Trm1 family. As to expression, widely expressed.

It is found in the nucleus. It localises to the nucleolus. The catalysed reaction is guanosine(27) in tRNA(Tyr) + 2 S-adenosyl-L-methionine = N(2)-dimethylguanosine(27) in tRNA(Tyr) + 2 S-adenosyl-L-homocysteine + 2 H(+). Specifically dimethylates a single guanine residue at position 27 of tRNA(Tyr) using S-adenosyl-L-methionine as donor of the methyl groups. Dimethylation at position 27 of tRNA(Tyr) is required for efficient translation of tyrosine codons. Also required to maintain 3-(3-amino-3-carboxypropyl)uridine (acp3U) in the D-loop of several cytoplasmic tRNAs. In Homo sapiens (Human), this protein is tRNA (guanine(27)-N(2))-dimethyltransferase.